Reading from the N-terminus, the 144-residue chain is MRKFLIVLLLPLLVLAQEKMLYKEKIEGIPYEDVKILLKTALDGKNMNVLAVQDVSQKPRMTVFYVCNLSYGEKILRTFPEFGALAPCRIYILEKEDGSVEVGYINIPNLVKGFRKYLTPQAQEVFLQADKDIKEAIKEVKGGF.

The N-terminal stretch at 1 to 16 is a signal peptide; sequence MRKFLIVLLLPLLVLA.

This is an uncharacterized protein from Aquifex aeolicus (strain VF5).